The primary structure comprises 141 residues: Hemoglobin subunit alpha-A (141 aa).

In terms of domain architecture, Globin spans 1–141 (VLSASDKTNV…VAKELTAKYR (141 aa)). H58 contributes to the O2 binding site. Heme b is bound at residue H87.

It belongs to the globin family. Heterotetramer of two alpha chains and two beta chains. In terms of tissue distribution, red blood cells.

Functionally, involved in oxygen transport from the lung to the various peripheral tissues. The protein is Hemoglobin subunit alpha-A (HBAA) of Phalacrocorax carbo (Great cormorant).